The sequence spans 198 residues: Recombination protein RecR (198 aa).

A C4-type zinc finger spans residues 59–74; that stretch reads CSLCCNYTDHDPCPIC. The Toprim domain occupies 82–175; the sequence is TLLCIVEQPR…KVTRIAHGLP (94 aa).

Belongs to the RecR family.

In terms of biological role, may play a role in DNA repair. It seems to be involved in an RecBC-independent recombinational process of DNA repair. It may act with RecF and RecO. The chain is Recombination protein RecR from Desulfitobacterium hafniense (strain Y51).